The primary structure comprises 421 residues: Gamma-glutamyl phosphate reductase (421 aa).

Belongs to the gamma-glutamyl phosphate reductase family.

The protein localises to the cytoplasm. The enzyme catalyses L-glutamate 5-semialdehyde + phosphate + NADP(+) = L-glutamyl 5-phosphate + NADPH + H(+). It functions in the pathway amino-acid biosynthesis; L-proline biosynthesis; L-glutamate 5-semialdehyde from L-glutamate: step 2/2. Catalyzes the NADPH-dependent reduction of L-glutamate 5-phosphate into L-glutamate 5-semialdehyde and phosphate. The product spontaneously undergoes cyclization to form 1-pyrroline-5-carboxylate. The polypeptide is Gamma-glutamyl phosphate reductase (Acinetobacter baumannii (strain SDF)).